A 299-amino-acid polypeptide reads, in one-letter code: Very long chain fatty acid elongase 5 (299 aa).

Position 1 is an N-acetylmethionine (Met-1). The next 6 helical transmembrane spans lie at 26–46 (WFLL…LLIV), 64–84 (ILVV…CELV), 112–132 (VLRW…FFIL), 150–170 (MLNI…YFGA), 205–225 (GQLL…IWPC), and 226–246 (TFPL…IALF). The tract at residues 275–299 (AAVNGHTNSFSPLENNVKPRKLRKD) is disordered. The span at 279-288 (GHTNSFSPLE) shows a compositional bias: polar residues. Ser-285 bears the Phosphoserine mark.

Belongs to the ELO family. ELOVL5 subfamily. Interacts with TECR.

It is found in the endoplasmic reticulum membrane. The protein localises to the cell projection. Its subcellular location is the dendrite. The enzyme catalyses a very-long-chain acyl-CoA + malonyl-CoA + H(+) = a very-long-chain 3-oxoacyl-CoA + CO2 + CoA. It carries out the reaction (6Z,9Z,12Z)-octadecatrienoyl-CoA + malonyl-CoA + H(+) = (8Z,11Z,14Z)-3-oxoeicosatrienoyl-CoA + CO2 + CoA. It catalyses the reaction (9Z,12Z,15Z)-octadecatrienoyl-CoA + malonyl-CoA + H(+) = (11Z,14Z,17Z)-3-oxoeicosatrienoyl-CoA + CO2 + CoA. The catalysed reaction is (9Z)-hexadecenoyl-CoA + malonyl-CoA + H(+) = 3-oxo-(11Z)-octadecenoyl-CoA + CO2 + CoA. The enzyme catalyses (9Z)-octadecenoyl-CoA + malonyl-CoA + H(+) = 3-oxo-(11Z)-eicosenoyl-CoA + CO2 + CoA. It carries out the reaction (11Z)-octadecenoyl-CoA + malonyl-CoA + H(+) = 3-oxo-(13Z)-eicosenoyl-CoA + CO2 + CoA. It catalyses the reaction (9Z,12Z)-octadecadienoyl-CoA + malonyl-CoA + H(+) = (11Z,14Z)-3-oxoicosa-11,14-dienoyl-CoA + CO2 + CoA. The catalysed reaction is (6Z,9Z,12Z,15Z)-octadecatetraenoyl-CoA + malonyl-CoA + H(+) = (8Z,11Z,14Z,17Z)-3-oxoicosatetraenoyl-CoA + CO2 + CoA. The enzyme catalyses (5Z,8Z,11Z,14Z)-eicosatetraenoyl-CoA + malonyl-CoA + H(+) = (7Z,10Z,13Z,16Z)-3-oxodocosatetraenoyl-CoA + CO2 + CoA. It carries out the reaction (5Z,8Z,11Z,14Z,17Z)-eicosapentaenoyl-CoA + malonyl-CoA + H(+) = 3-oxo-(7Z,10Z,13Z,16Z,19Z)-docosapentaenoyl-CoA + CO2 + CoA. Its pathway is lipid metabolism; polyunsaturated fatty acid biosynthesis. Catalyzes the first and rate-limiting reaction of the four reactions that constitute the long-chain fatty acids elongation cycle. This endoplasmic reticulum-bound enzymatic process allows the addition of 2 carbons to the chain of long- and very long-chain fatty acids (VLCFAs) per cycle. Condensing enzyme that acts specifically toward polyunsaturated acyl-CoA with the higher activity toward C18:3(n-6) acyl-CoA. May participate in the production of monounsaturated and of polyunsaturated VLCFAs of different chain lengths that are involved in multiple biological processes as precursors of membrane lipids and lipid mediators. In conditions where the essential linoleic and alpha linoleic fatty acids are lacking it is also involved in the synthesis of Mead acid from oleic acid. This Macaca fascicularis (Crab-eating macaque) protein is Very long chain fatty acid elongase 5.